Consider the following 1588-residue polypeptide: Paternally-expressed gene 3 protein (1588 aa).

Residues 46-128 (HQRFRNLIYV…TLLENYKEMY (83 aa)) form the SCAN box domain. Disordered regions lie at residues 128–230 (YQPE…ESYQ), 266–306 (DGHS…RRGI), and 319–349 (KFIK…MSDD). Residues 129-142 (QPEDDNNSDVTSDD) are compositionally biased toward acidic residues. Composition is skewed to basic and acidic residues over residues 143–152 (DMTRNRRESS), 161–182 (SGDR…DRWS), 206–225 (FEMD…RSQD), and 295–306 (PEAKKSTHRRGI). C2H2-type zinc fingers lie at residues 454-476 (YVCD…QIMH), 507-529 (FECK…RKIH), and 565-587 (YECR…QKIH). Residues 588–607 (FGDDKDNEREHERERERGET) are compositionally biased toward basic and acidic residues. A disordered region spans residues 588–610 (FGDDKDNEREHERERERGETFRP). The C2H2-type 4 zinc-finger motif lies at 627-649 (YECKVCGETFLHSSSLKEHQKIH). The disordered stretch occupies residues 838-930 (LVASKPPRSH…EFSVPSSNVR (93 aa)). The segment covering 868–881 (LNDKRQKIPARENP) has biased composition (basic and acidic residues). The C2H2-type 5 zinc-finger motif lies at 969–991 (YECQECGECFAHSSDLTEHQKIH). The tract at residues 1056–1104 (EKSHGEESQGENTDGEETHSEETHGQETIEDPVIQGSDMEDPQKDDPDD) is disordered. Residues 1071-1082 (EETHSEETHGQE) show a composition bias toward basic and acidic residues. C2H2-type zinc fingers lie at residues 1107-1129 (YECE…QKVH), 1163-1185 (YECP…QRIH), 1225-1247 (IRCL…MRLH), 1282-1304 (FECA…VTVH), and 1332-1354 (YECK…KELH). Residues 1393–1495 (EAAEPEVEAX…GIEDPEEGED (103 aa)) are disordered. The segment covering 1395–1415 (AEPEVEAXEPEVEAAEPEVEA) has biased composition (acidic residues). A run of 7 repeats spans residues 1397 to 1403 (PEVEAXE), 1404 to 1410 (PEVEAAE), 1411 to 1417 (PEVEAAE), 1418 to 1422 (PNGEA), 1425 to 1429 (PDGEA), 1432 to 1436 (PIGEA), and 1439 to 1443 (PNGEA). The 3 X 7 AA repeat of P-E-V-E-A-A-E stretch occupies residues 1397-1417 (PEVEAXEPEVEAAEPEVEAAE). Positions 1418–1443 (PNGEAEGPDGEAAEPIGEAGQPNGEA) are 4 X 5 AA repeat of P-X-G-E-A. Composition is skewed to acidic residues over residues 1449–1466 (DADE…ERAE) and 1475–1495 (PEGD…EGED). 2 consecutive C2H2-type zinc fingers follow at residues 1505–1527 (YDCH…LKTH) and 1564–1586 (FKCD…QNTH).

The protein belongs to the krueppel C2H2-type zinc-finger protein family. In terms of assembly, homodimer. Interacts with SIAH1A and SIAH2. Interacts with TRAF2.

The protein resides in the nucleus. It localises to the cytoplasm. Induces apoptosis in cooperation with SIAH1A. Acts as a mediator between p53/TP53 and BAX in a neuronal death pathway that is activated by DNA damage. Acts synergistically with TRAF2 and inhibits TNF induced apoptosis through activation of NF-kappa-B. The chain is Paternally-expressed gene 3 protein (PEG3) from Pan paniscus (Pygmy chimpanzee).